Here is a 194-residue protein sequence, read N- to C-terminus: ATP-dependent Clp protease proteolytic subunit 1 (194 aa).

S98 acts as the Nucleophile in catalysis. H123 is an active-site residue.

It belongs to the peptidase S14 family. As to quaternary structure, fourteen ClpP subunits assemble into 2 heptameric rings which stack back to back to give a disk-like structure with a central cavity, resembling the structure of eukaryotic proteasomes.

The protein resides in the cytoplasm. The catalysed reaction is Hydrolysis of proteins to small peptides in the presence of ATP and magnesium. alpha-casein is the usual test substrate. In the absence of ATP, only oligopeptides shorter than five residues are hydrolyzed (such as succinyl-Leu-Tyr-|-NHMec, and Leu-Tyr-Leu-|-Tyr-Trp, in which cleavage of the -Tyr-|-Leu- and -Tyr-|-Trp bonds also occurs).. Its function is as follows. Cleaves peptides in various proteins in a process that requires ATP hydrolysis. Has a chymotrypsin-like activity. Plays a major role in the degradation of misfolded proteins. ClpXP1 is involved in the complete degradation of the Site-2 clipped anti-sigma-W factor RsiW. This results in the release of SigW and the transcription activation of the genes under the control of the sigma-W factor. This Halalkalibacterium halodurans (strain ATCC BAA-125 / DSM 18197 / FERM 7344 / JCM 9153 / C-125) (Bacillus halodurans) protein is ATP-dependent Clp protease proteolytic subunit 1.